A 1807-amino-acid polypeptide reads, in one-letter code: Integrin beta-4 (1807 aa).

Residues 1–27 form the signal peptide; it reads MAGLCSSPWVKLLLAVVLSAGLPGNMA. The Extracellular segment spans residues 28–713; the sequence is NRCKKAQVKS…KKKDCLPAPS (686 aa). The region spanning 29 to 73 is the PSI domain; it reads RCKKAQVKSCTECIRVDKSCAYCTDELFKERRCNTQADVLAAGCR. 8 disulfide bridges follow: Cys30/Cys48, Cys38/Cys456, Cys41/Cys61, Cys51/Cys72, Cys245/Cys288, Cys458/Cys477, Cys469/Cys480, and Cys482/Cys491. The VWFA domain occupies 131–340; that stretch reads DLYILMDFSN…SYYEKLHKYF (210 aa). Residues Ser139 and Ser141 each coordinate Mg(2+). 4 residues coordinate Ca(2+): Ser141, Asp144, Asp145, and Asp176. The involved in NRG1- and IGF1-binding stretch occupies residues 194 to 199; the sequence is WPNSDP. Ca(2+)-binding residues include Asn228, Asp230, Pro232, and Glu233. Glu233 lines the Mg(2+) pocket. Asn327 carries N-linked (GlcNAc...) asparagine glycosylation. Position 350 (Glu350) interacts with Ca(2+). 4 consecutive I-EGF domains span residues 458-492, 493-538, 539-575, and 576-617; these read CELQ…KTCN, CSTG…HFCE, YDNF…RSCD, and CPLS…TTCE. N-linked (GlcNAc...) asparagine glycosylation is present at Asn492. 11 cysteine pairs are disulfide-bonded: Cys493–Cys521, Cys504–Cys519, Cys513–Cys524, Cys526–Cys537, Cys544–Cys558, Cys552–Cys563, Cys565–Cys574, Cys576–Cys599, Cys583–Cys597, Cys591–Cys602, and Cys604–Cys616. The N-linked (GlcNAc...) asparagine glycan is linked to Asn580. Asn619 carries N-linked (GlcNAc...) asparagine glycosylation. 4 disulfide bridges follow: Cys628–Cys673, Cys634–Cys653, Cys637–Cys650, and Cys682–Cys708. The N-linked (GlcNAc...) asparagine glycan is linked to Asn697. Residues 714–734 form a helical membrane-spanning segment; it reads WWLIPLLIFLLLLLVLLLLLC. The palmitoylated on several cysteines stretch occupies residues 734–751; it reads CWKYCACCKACLGLLPCC. Over 735–1807 the chain is Cytoplasmic; sequence WKYCACCKAC…THMDQQFFQT (1073 aa). Phosphoserine occurs at positions 773, 1071, and 1121. The Calx-beta domain maps to 981-1086; the sequence is VNITIIKEQA…QVRRFQVQLS (106 aa). A disordered region spans residues 1119–1141; it reads SASPPLPRGDLGAPQNPNAKAAG. Fibronectin type-III domains lie at 1131–1220 and 1224–1323; these read APQN…THQE and EPGR…TQPK. Phosphoserine occurs at positions 1386, 1389, and 1405. Thr1418 is subject to Phosphothreonine. A Phosphoserine modification is found at Ser1425. Thr1514 is subject to Phosphothreonine. Fibronectin type-III domains lie at 1514-1609 and 1627-1723; these read TPTR…VHPQ and APGP…SQDG. A Phosphoserine modification is found at Ser1776.

This sequence belongs to the integrin beta chain family. As to quaternary structure, heterodimer of an alpha and a beta subunit. Beta-4 associates with alpha-6. Interacts (via cytoplasmic region) with COL17A1 (via cytoplasmic region). Interacts (via cytoplasmic region) with DST isoform 3 (via N-terminus). Interacts (via cytoplasmic domain) with DST (via N-terminus). Interacts with RAC1. ITGA6:ITGB4 is found in a ternary complex with NRG1 and ERBB3. ITGA6:ITGB4 is found in a ternary complex with IGF1 and IGF1R. ITGA6:ITGB4 interacts with IGF2. Interacts with TMEM268; this interaction prevents ITGB4 degradation. Palmitoylated by DHHC3 at several cysteines of the membrane-proximal region, enhancing stability and cell surface expression. Palmitoylation also promotes secondary association with tertaspanins.

It is found in the cell membrane. It localises to the cell junction. Its subcellular location is the hemidesmosome. Functionally, integrin alpha-6/beta-4 is a receptor for laminin. It plays a critical structural role in the hemidesmosome of epithelial cells. Is required for the regulation of keratinocyte polarity and motility. ITGA6:ITGB4 binds to NRG1 (via EGF domain) and this binding is essential for NRG1-ERBB signaling. ITGA6:ITGB4 binds to IGF1 and this binding is essential for IGF1 signaling. ITGA6:ITGB4 binds to IGF2 and this binding is essential for IGF2 signaling. This is Integrin beta-4 (Itgb4) from Rattus norvegicus (Rat).